A 286-amino-acid chain; its full sequence is MHTLTLPAPAKLNLWLHIIGRRADGYHELETVFQFLDHGDELSFALREDGVIRLHTEIEAVPHDSNLIVRAARKLQEQSGTALGADIWLTKVLPMGGGIGGGSSDAATTLLALAHLWQLDWDEDRLAALGLSLGADVPVFVRGHAAFAQGVGEQLTPVDPIEPWYVVLVPQVSVSTVEIFSHPQLTRDSLPLKMRPVPEGNSRNDCQPVVEQNYPEVRNALNSLGKFTEARLTGTGSCVFGAFPSKAEADKVLALLSATQTGFVAKGSNISMLHRKLQSLVKKSSA.

Lysine 11 is an active-site residue. 94–104 (PMGGGIGGGSS) serves as a coordination point for ATP. Aspartate 136 is an active-site residue.

This sequence belongs to the GHMP kinase family. IspE subfamily.

It catalyses the reaction 4-CDP-2-C-methyl-D-erythritol + ATP = 4-CDP-2-C-methyl-D-erythritol 2-phosphate + ADP + H(+). The protein operates within isoprenoid biosynthesis; isopentenyl diphosphate biosynthesis via DXP pathway; isopentenyl diphosphate from 1-deoxy-D-xylulose 5-phosphate: step 3/6. Functionally, catalyzes the phosphorylation of the position 2 hydroxy group of 4-diphosphocytidyl-2C-methyl-D-erythritol. The protein is 4-diphosphocytidyl-2-C-methyl-D-erythritol kinase of Pseudomonas putida (strain GB-1).